We begin with the raw amino-acid sequence, 89 residues long: Small ribosomal subunit protein bS16c (89 aa).

It belongs to the bacterial ribosomal protein bS16 family.

The protein localises to the plastid. The protein resides in the chloroplast. This Drimys granadensis protein is Small ribosomal subunit protein bS16c.